A 530-amino-acid polypeptide reads, in one-letter code: TNF receptor-associated factor 6 (530 aa).

The segment at 1-362 (MSLLNCENSC…EAQQCNGIYI (362 aa)) is interaction with TAX1BP1. The RING-type zinc finger occupies 70–109 (CPICLMALREAVQTPCGHRFCKACIIKSIRDAGHKCPVDN). Lys124 is covalently cross-linked (Glycyl lysine isopeptide (Lys-Gly) (interchain with G-Cter in SUMO); alternate). Lys124 is covalently cross-linked (Glycyl lysine isopeptide (Lys-Gly) (interchain with G-Cter in ubiquitin); alternate). A Glycyl lysine isopeptide (Lys-Gly) (interchain with G-Cter in SUMO) cross-link involves residue Lys142. TRAF-type zinc fingers lie at residues 150–202 (DHQV…EEKE) and 203–259 (IHDQ…NHLA). Residues 299–356 (EDPNYEETIKQLESRLVRQDHQIRELTAKMETQSMYVGELKRTIRTLEDKVAEMEAQQ) are a coiled coil. Lys327 is covalently cross-linked (Glycyl lysine isopeptide (Lys-Gly) (interchain with G-Cter in ubiquitin)). In terms of domain architecture, MATH spans 358–507 (NGIYIWKIGN…DDTLLVRCEV (150 aa)). Positions 363 to 530 (WKIGNFGMHL…FQPRSTDAGV (168 aa)) are interaction with TANK. Lys461 participates in a covalent cross-link: Glycyl lysine isopeptide (Lys-Gly) (interchain with G-Cter in SUMO).

Belongs to the TNF receptor-associated factor family. A subfamily. Homotrimer. Homooligomer. N-terminal region is dimeric while C-terminal region is trimeric; maybe providing a mode of oligomerization. Upon IL1B treatment, forms a complex with PELI1, IRAK1, IRAK4 and MYD88; this complex recruits MAP3K7/TAK1, TAB1 and TAB2 to mediate NF-kappa-B activation. Direct binding of SMAD6 to PELI1 prevents the complex formation and hence negatively regulates IL1R-TLR signaling and eventually NF-kappa-B-mediated gene expression. Binds to TNFRSF5/CD40 and TNFRSF11A/RANK. Associates with NGFR, TNFRSF17, IRAK2, IRAK3, PELI2, PELI3, RIPK2, MAP3K1, MAP3K5, MAP3K14, CSK, TRAF, TRAF-interacting protein TRIP and TNF receptor associated protein TDP2. Binds UBE2V1. Interacts with MAVS/IPS1. Interacts with TAX1BP1; this interaction mediates deubiquitination of TRAF6 and inhibition of NF-kappa-B activation. Interacts with IL17R. Interacts with SQSTM1 bridging NTRK1 and NGFR. Forms a ternary complex with SQSTM1 and PRKCZ. Interacts with IL1RL1. Interacts with AJUBA. Interacts with TRAFD1. Interacts with TICAM2. Interacts with ZFAND5. Interacts with ARRB1 and ARRB2. Interacts with MAP3K7 and TAB1/MAP3K7IP1; during IL-1 signaling. Interacts with UBE2N. Interacts with TGFBR1, HDAC1 and RANGAP1. Interacts with AKT1, AKT2 and AKT3. Interacts (via TRAF domains) with NUMBL (via C-terminal). Interacts (via TRAF domains) with DYNC2I2 (via WD domains). Interacts with RBCK1. Interacts with LIMD1 (via LIM domains). Interacts with RSAD2/viperin. Interacts with IFIT3 (via N-terminus). Interacts (via C-terminus) with EIF2AK2/PKR (via the kinase catalytic domain). Interacts with CARD14. Interacts with CD40 and MAP3K8; the interaction is required for ERK activation. Interacts with TICAM1 and this interaction is enhanced in the presence of WDFY1. Interacts with TANK; this interaction increases in response to DNA damage. Interacts with USP10; this interaction increases in response to DNA damage. Interacts with ZC3H12A; this interaction increases in response to DNA damage and is stimulated by TANK. Interacts with WDFY3. Interacts with TRIM13. Interacts with GPS2. Interacts (via C-terminus) with SASH1. Interacts with LRRC19. Interacts with IL17RA and TRAF3IP2. Interacts with TOMM70. Interacts with AMBRA1; interaction is required to mediate 'Lys-63'-linked ubiquitination of ULK1. Interacts with CRBN; this interaction inhibits TLR4-mediated signaling by preventing TRAF6-mediated ubiquitination of ECSIT. In terms of assembly, (Microbial infection) Interacts (via N-terminal RING domain) with Toxoplasma gondii GRA7; the interaction plays a role in GRA7-induced pro-inflammatory cytokine production in mouse macrophages. Sumoylated on Lys-124, Lys-142 and Lys-461 with SUMO1. Post-translationally, polyubiquitinated on Lys-124 by TRAF3IP2; after cell stimulation with IL17A. Polyubiquitinated; after cell stimulation with IL1B or TGFB. This ligand-induced cell stimulation leads to dimerization/oligomerization of TRAF6 molecules, followed by auto-ubiquitination which involves UBE2N and UBE2V1 and leads to TRAF6 activation. This 'Lys-63' site-specific poly-ubiquitination appears to be associated with the activation of signaling molecules. Endogenous autoubiquitination occurs only for the cytoplasmic form. Deubiquitinated by USP10 in a TANK-dependent manner, leading to the negative regulation of NF-kappa-B signaling upon DNA damage. LRRC19 induces 'Lys-63' ubiquitination. Ubiquitinated at Lys-327 by the SCF(FBXL2) complex, leading to its degradation by the proteasome. Highly expressed in brain, lung, liver, skeletal muscle, and kidney; lower expression in heart, spleen, and testis.

It is found in the cytoplasm. It localises to the cell cortex. The protein localises to the nucleus. The protein resides in the lipid droplet. The enzyme catalyses S-ubiquitinyl-[E2 ubiquitin-conjugating enzyme]-L-cysteine + [acceptor protein]-L-lysine = [E2 ubiquitin-conjugating enzyme]-L-cysteine + N(6)-ubiquitinyl-[acceptor protein]-L-lysine.. The protein operates within protein modification; protein ubiquitination. E3 ubiquitin ligase that, together with UBE2N and UBE2V1, mediates the synthesis of 'Lys-63'-linked-polyubiquitin chains conjugated to proteins, such as ECSIT, IKBKG, IRAK1, AKT1 and AKT2. Also mediates ubiquitination of free/unanchored polyubiquitin chain that leads to MAP3K7 activation. Leads to the activation of NF-kappa-B and JUN. Seems to also play a role in dendritic cells (DCs) maturation and/or activation. Represses c-Myb-mediated transactivation, in B-lymphocytes. Adapter protein that seems to play a role in signal transduction initiated via TNF receptor, IL-1 receptor and IL-17 receptor. Regulates osteoclast differentiation by mediating the activation of adapter protein complex 1 (AP-1) and NF-kappa-B, in response to RANK-L stimulation. Together with MAP3K8, mediates CD40 signals that activate ERK in B-cells and macrophages, and thus may play a role in the regulation of immunoglobulin production. Acts as a regulator of the JNK and NF-kappa-B signaling pathways by initiating assembly of heterotypic 'Lys-63'-/'Lys-48'-linked branched ubiquitin chains that are then recognized by TAB2: TRAF6 catalyzes initial 'Lys-63'-linked-polyubiquitin chains that are then branched via 'Lys-48'-linked polyubiquitin by HUWE1. 'Lys-63'-/'Lys-48'-linked branched ubiquitin chains protect 'Lys-63'-linkages from CYLD deubiquitination. Also participates in the TCR signaling by ubiquitinating LAT. The polypeptide is TNF receptor-associated factor 6 (Traf6) (Mus musculus (Mouse)).